Here is a 256-residue protein sequence, read N- to C-terminus: uncharacterized protein (256 aa).

The 68-residue stretch at 16–83 (VRLQKILSRA…DSLVYLALNK (68 aa)) folds into the S4 RNA-binding domain. The Nucleophile role is filled by Asp121.

It belongs to the pseudouridine synthase RsuA family.

It carries out the reaction a uridine in RNA = a pseudouridine in RNA. This is an uncharacterized protein from Mycobacterium leprae (strain TN).